A 397-amino-acid polypeptide reads, in one-letter code: DnaJ homolog subfamily A member 1 (397 aa).

Residues 6-68 enclose the J domain; sequence TYYDVLGVKP…KKRELYDKGG (63 aa). Lysine 66 is subject to N6-acetyllysine. The residue at position 83 (serine 83) is a Phosphoserine. Residues 121–205 form a CR-type zinc finger; the sequence is GATRKLALQK…CNGRKIVREK (85 aa). Cysteine 134, cysteine 137, cysteine 150, cysteine 153, cysteine 177, cysteine 180, cysteine 193, and cysteine 196 together coordinate Zn(2+). 4 CXXCXGXG motif repeats span residues 134–141, 150–157, 177–184, and 193–200; these read CDKCEGRG, CPNCRGTG, CMECQGHG, and CKSCNGRK. At serine 335 the chain carries Phosphoserine. The tract at residues 352–397 is disordered; sequence VEETDEMDQVELVDFDPNQERRRHYNGEAYEDDEHHPRGGVQCQTS. Acidic residues predominate over residues 353–365; it reads EETDEMDQVELVD. The residue at position 381 (tyrosine 381) is a Phosphotyrosine. Cysteine 394 is subject to Cysteine methyl ester. A lipid anchor (S-farnesyl cysteine) is attached at cysteine 394. Positions 395 to 397 are cleaved as a propeptide — removed in mature form; the sequence is QTS.

Identified in a complex with HSPA1B and BAX. Interacts with RNF207.

The protein localises to the membrane. It localises to the cytoplasm. It is found in the microsome. Its subcellular location is the mitochondrion. The protein resides in the nucleus. The protein localises to the perinuclear region. Co-chaperone for HSPA8/Hsc70. Plays a role in protein transport into mitochondria via its role as co-chaperone. Stimulates ATP hydrolysis, but not the folding of unfolded proteins mediated by HSPA1A (in vitro). Promotes apoptosis in response to cellular stress mediated by exposure to anisomycin or UV. Functions as co-chaperone for HSPA1B and negatively regulates the translocation of BAX from the cytosol to mitochondria in response to cellular stress, thereby protecting cells against apoptosis. This chain is DnaJ homolog subfamily A member 1 (Dnaja1), found in Mus musculus (Mouse).